A 37-amino-acid polypeptide reads, in one-letter code: L-amino-acid oxidase (37 aa).

The protein belongs to the flavin monoamine oxidase family. FIG1 subfamily. In terms of assembly, homodimer; non-covalently linked. FAD serves as cofactor. Post-translationally, N-Glycosylated. In terms of tissue distribution, expressed by the venom gland.

The protein resides in the secreted. It catalyses the reaction an L-alpha-amino acid + O2 + H2O = a 2-oxocarboxylate + H2O2 + NH4(+). It carries out the reaction L-leucine + O2 + H2O = 4-methyl-2-oxopentanoate + H2O2 + NH4(+). The catalysed reaction is L-phenylalanine + O2 + H2O = 3-phenylpyruvate + H2O2 + NH4(+). The enzyme catalyses L-tryptophan + O2 + H2O = indole-3-pyruvate + H2O2 + NH4(+). It catalyses the reaction L-methionine + O2 + H2O = 4-methylsulfanyl-2-oxobutanoate + H2O2 + NH4(+). It carries out the reaction L-isoleucine + O2 + H2O = (S)-3-methyl-2-oxopentanoate + H2O2 + NH4(+). The catalysed reaction is L-arginine + O2 + H2O = 5-guanidino-2-oxopentanoate + H2O2 + NH4(+). The enzyme catalyses L-histidine + O2 + H2O = 3-(imidazol-5-yl)pyruvate + H2O2 + NH4(+). It catalyses the reaction L-valine + O2 + H2O = 3-methyl-2-oxobutanoate + H2O2 + NH4(+). In terms of biological role, catalyzes an oxidative deamination of predominantly hydrophobic and aromatic L-amino acids, thus producing hydrogen peroxide that may contribute to the diverse toxic effects of this enzyme. Is highly active on L-Leu, L-Met, moderately active on L-Arg, L-Trp, L-Phe, L-Val, L-His, and L-Ile, and is weakly or not active on L-Cys, L-Lys, L-Ala, L-Thr, L-Asp, L-Ser, and L-Pro. Exhibits diverse biological activities, such as hemorrhage, edema, apoptosis of vascular endothelial cells or tumor cell lines, as well as regulation of platelet aggregation. Effects of snake L-amino oxidases on platelets are controversial, since they either induce aggregation or inhibit agonist-induced aggregation. These different effects are probably due to different experimental conditions. This protein induce hemolysis and has antibacterial and antiparasitic activities (against the Gram-positive S.aureus). Tested in vivo, this protein significantly inhibits Ehrlich ascite tumors growth and induces an influx of polymorphonuclear cells, as well as spontaneous liberation of hydrogen peroxide from peritoneal macrophages. The sequence is that of L-amino-acid oxidase from Bothrops jararaca (Jararaca).